The sequence spans 179 residues: MQTLKAKYNEQVRPALMQQFGYSSIMAVPRIEKIVINEGLGSSKDDSKAIDKAAKELALITLQKPVITKAKKSISNFKLRQGMPVGVKVTLRGERMYVFLEKLINIGLPRIRDFRGINPNSFDGRGNYNLGIKEQLIFPEITYDMVDKVRGMDITIVTTAKTDEEARALLQAMGLPFRK.

It belongs to the universal ribosomal protein uL5 family. As to quaternary structure, part of the 50S ribosomal subunit; part of the 5S rRNA/L5/L18/L25 subcomplex. Contacts the 5S rRNA and the P site tRNA. Forms a bridge to the 30S subunit in the 70S ribosome.

This is one of the proteins that bind and probably mediate the attachment of the 5S RNA into the large ribosomal subunit, where it forms part of the central protuberance. In the 70S ribosome it contacts protein S13 of the 30S subunit (bridge B1b), connecting the 2 subunits; this bridge is implicated in subunit movement. Contacts the P site tRNA; the 5S rRNA and some of its associated proteins might help stabilize positioning of ribosome-bound tRNAs. This is Large ribosomal subunit protein uL5 from Deinococcus geothermalis (strain DSM 11300 / CIP 105573 / AG-3a).